The chain runs to 314 residues: tRNA pseudouridine synthase B (314 aa).

Residue His-43 participates in substrate binding. Asp-48 acts as the Nucleophile in catalysis. Substrate contacts are provided by Tyr-76, Tyr-179, and Leu-200.

It belongs to the pseudouridine synthase TruB family. Type 1 subfamily.

It carries out the reaction uridine(55) in tRNA = pseudouridine(55) in tRNA. In terms of biological role, responsible for synthesis of pseudouridine from uracil-55 in the psi GC loop of transfer RNAs. This chain is tRNA pseudouridine synthase B, found in Salmonella paratyphi B (strain ATCC BAA-1250 / SPB7).